A 102-amino-acid chain; its full sequence is MQKARIKLASTNIKALNEVTDQIKQIAERTGVRMSGPIPLPTKRIRITTRKSPDGEGSATFDRFELRVHKRLVDIEADERAMRQIMRIRVPEDVTIEIELIS.

It belongs to the universal ribosomal protein uS10 family. Part of the 30S ribosomal subunit.

In terms of biological role, involved in the binding of tRNA to the ribosomes. The protein is Small ribosomal subunit protein uS10 of Thermococcus kodakarensis (strain ATCC BAA-918 / JCM 12380 / KOD1) (Pyrococcus kodakaraensis (strain KOD1)).